We begin with the raw amino-acid sequence, 165 residues long: Dihydrofolate reductase (165 aa).

Residues 3–165 (VVGLIWAQST…RYRLHSYHRS (163 aa)) form the DHFR domain. 7–9 (IWA) serves as a coordination point for substrate. NADP(+)-binding positions include 8–9 (WA) and 16–21 (IGRDGG). D29 is a binding site for substrate. 45–48 (GRRT) is a binding site for NADP(+). R62 lines the substrate pocket. NADP(+) is bound by residues 67-70 (LSRQ) and 100-105 (IGGEQI). T119 is a substrate binding site.

Belongs to the dihydrofolate reductase family.

The enzyme catalyses (6S)-5,6,7,8-tetrahydrofolate + NADP(+) = 7,8-dihydrofolate + NADPH + H(+). It functions in the pathway cofactor biosynthesis; tetrahydrofolate biosynthesis; 5,6,7,8-tetrahydrofolate from 7,8-dihydrofolate: step 1/1. In terms of biological role, key enzyme in folate metabolism. Catalyzes an essential reaction for de novo glycine and purine synthesis, and for DNA precursor synthesis. This Mycobacterium leprae (strain TN) protein is Dihydrofolate reductase (folA).